Here is a 1164-residue protein sequence, read N- to C-terminus: DNA-directed RNA polymerase 132 kDa polypeptide (1164 aa).

This sequence belongs to the RNA polymerase beta chain family. In terms of assembly, the DNA-dependent RNA polymerase used for intermediate and late genes expression consists of eight subunits (147) kDa, (133) kDa, (35) kDa, (30) kDa, (22) kDa, (19) kDa, (18) kDa and (7) kDa totalling more than 500 kDa in mass. The same holoenzyme, with the addition of the transcription-specificity factor RAP94, is used for early gene expression.

It localises to the virion. The enzyme catalyses RNA(n) + a ribonucleoside 5'-triphosphate = RNA(n+1) + diphosphate. Part of the DNA-dependent RNA polymerase which catalyzes the transcription of viral DNA into RNA using the four ribonucleoside triphosphates as substrates. Responsible for the transcription of early, intermediate and late genes. DNA-dependent RNA polymerase associates with the early transcription factor (ETF), itself composed of D6 and A7, thereby allowing the early genes transcription. Late transcription, and probably also intermediate transcription, require newly synthesized RNA polymerase. The polypeptide is DNA-directed RNA polymerase 132 kDa polypeptide (RPO132) (Cowpox virus (strain GRI-90 / Grishak) (CPV)).